The primary structure comprises 252 residues: 3-dehydroquinate dehydratase (252 aa).

3-dehydroquinate is bound by residues S21, 46–48, and R82; that span reads EWR. The active-site Proton donor/acceptor is H143. The active-site Schiff-base intermediate with substrate is K170. 3-dehydroquinate is bound by residues R213, S232, and Q236.

This sequence belongs to the type-I 3-dehydroquinase family. As to quaternary structure, homodimer.

It catalyses the reaction 3-dehydroquinate = 3-dehydroshikimate + H2O. The protein operates within metabolic intermediate biosynthesis; chorismate biosynthesis; chorismate from D-erythrose 4-phosphate and phosphoenolpyruvate: step 3/7. Its function is as follows. Involved in the third step of the chorismate pathway, which leads to the biosynthesis of aromatic amino acids. Catalyzes the cis-dehydration of 3-dehydroquinate (DHQ) and introduces the first double bond of the aromatic ring to yield 3-dehydroshikimate. The sequence is that of 3-dehydroquinate dehydratase from Escherichia coli O9:H4 (strain HS).